The primary structure comprises 957 residues: MPPQIPNENDDLFTRWLKSRAIIQRAVSTRECFDSEVFLASGGWNITNEIITLKKYYQLKWPNSSCNSFHPKTVEFIKERLHNLEEHDSSWKIPNPAYSFKKAFLEDTKSAFSNLEPVWGPSRLLNPAELLLPQDEKLLVQEIPLEFAPFQYTNRFAYGGLQFKNNLFVTYGSYSFLAAGQCVEVHNFDILLNVSSLEICHALLPVIIPDDGDVRNFRNSSYVKFKDTQFNSIPELCSINFMKICNFMHQDFLLACGDNGIVYIWEINKVIKIFNKFTSDILGGKDNSRERYINVDPYMVLRVEESCWSVDVIDINGIIYIAVGHNKPGVTVFAFDKDVKKERRYIRPLDLPSSHNVPCVNFVPNSKDSVGYITLSYCSIFGNVVTVKLKEHDCTILTSFLDTQFFGDDLWTITPLTKKDFAKVDNFELLNLNYQDGFKESMLYSICRDDFLLGYYCDNAYLSGNFGIGTLLNQFQVPVTDLRLTSSAGIPDEVIPLRFTSFDRNYTTTGSIKYEYSREDFALILHAGDLDDMNDAVTKNTSCEQHLHQWTFWEDSGYKHYRATERGFSKYKDIINTFPQLITPSGRNKTSQYQNTSGRKICEPSTYKLTDLENDIEDISREFNRSIRNLKMDKQRQLRTSKEFKSLSSVNHIPNIESGNFLWYNTDAAADWRTLFGKDLNTVLKDPEICSLQLNSTEEDDVNSDPENEESGSSLTSFQRRYRDTEQRAHLKSESQKSWGFHNYVRNVKRLLESAVPGSEDSPLGYQLSEMHDEFFFLTTAHRLVLMKANPLIIISATHHEIFPLDGVVTCASKSLLQALNRINFVCHIKELNCIAVASQLGLISLLRLTEYRGIYSFRQEYILGWEVQDPVNPSPECRCNRNLFDAPMYGADGESSDTYCGVCDVYFPMGDICGLDYTYASDSEELKRKGYATLYVASRGSLRAFKITTEHGTTQQ.

A disordered region spans residues 695 to 719; it reads NSTEEDDVNSDPENEESGSSLTSFQ. Acidic residues predominate over residues 697-710; it reads TEEDDVNSDPENEE. Ser704 carries the post-translational modification Phosphoserine.

In terms of assembly, component of a cullin-RING ligase (CRL) composed of 4 subunits: the RING protein HRT1, the cullin RTT101, a linker protein MMS1, and the substrate receptor CRT10. Interacts with MMS1.

Substrate targeting component of a cullin-RING-based E3 ubiquitin-protein ligase complex RTT101(MMS1-CRT10). RTT101(MMS1-CRT10) may regulate nucleotide synthesis through transcriptional regulation of RNR genes encoding ribonucleotide reductases. This Saccharomyces cerevisiae (strain ATCC 204508 / S288c) (Baker's yeast) protein is Protein CRT10 (CRT10).